A 205-amino-acid polypeptide reads, in one-letter code: Small ribosomal subunit protein uS4 (205 aa).

Positions Asn18–Ser46 are disordered. The 64-residue stretch at Arg94–Gln157 folds into the S4 RNA-binding domain.

It belongs to the universal ribosomal protein uS4 family. Part of the 30S ribosomal subunit. Contacts protein S5. The interaction surface between S4 and S5 is involved in control of translational fidelity.

Its function is as follows. One of the primary rRNA binding proteins, it binds directly to 16S rRNA where it nucleates assembly of the body of the 30S subunit. In terms of biological role, with S5 and S12 plays an important role in translational accuracy. The protein is Small ribosomal subunit protein uS4 of Xanthobacter autotrophicus (strain ATCC BAA-1158 / Py2).